Consider the following 627-residue polypeptide: BEL1-like homeodomain protein 4 (627 aa).

The tract at residues Ser-206–Pro-225 is disordered. Positions Val-215–Pro-225 are enriched in low complexity. The segment at Ser-241 to Val-257 is SR/KY domain. Residues Lys-263–Gln-307 are disordered. The BELL domain stretch occupies residues Asp-302–Leu-373. The segment at residues Ala-424–Met-486 is a DNA-binding region (homeobox). The interval Glu-494–Asn-530 is disordered. Over residues Asn-507–Asn-530 the composition is skewed to low complexity.

The protein belongs to the TALE/BELL homeobox family. As to quaternary structure, may form heterodimeric complexes with TALE/KNOX proteins. Interacts with OFP1, OFP2 and OFP5. Interacts with KNATM, isoform KNATM-B. Expressed in lateral organs.

The protein resides in the nucleus. Functionally, transcription factor that establishes leaf shape by repressing growth in specific subdomains of the leaf. Negatively regulates knox homeobox gene KNAT1/BP expression. This is BEL1-like homeodomain protein 4 (BLH4) from Arabidopsis thaliana (Mouse-ear cress).